We begin with the raw amino-acid sequence, 511 residues long: Centrosomal protein CCDC61 (511 aa).

A head domain region spans residues 1-144; sequence MEVGTVVQEE…PLPLPYLGKP (144 aa). Residues 147 to 272 are a coiled coil; sequence AELQKEIRAL…RVKSLTTELA (126 aa). Disordered stretches follow at residues 306 to 403 and 447 to 486; these read TRVG…SREP and RGRK…SMDT. Basic and acidic residues predominate over residues 315 to 335; sequence GSRERIEDRGRRSEERVRRAD. Polar residues predominate over residues 338–352; the sequence is GSRNCITRPSPSPTG. Residues 366-378 show a composition bias toward basic and acidic residues; it reads DRQRRQKEAELKS.

It belongs to the CCDC61 family. In terms of assembly, forms homodimers (via head domain).

Its subcellular location is the cytoplasm. It localises to the cytoskeleton. It is found in the microtubule organizing center. The protein resides in the centrosome. The protein localises to the centriolar satellite. Its subcellular location is the cilium basal body. Its function is as follows. Microtubule-binding centrosomal protein required for centriole cohesion, independently of the centrosome-associated protein/CEP250 and rootletin/CROCC linker. In interphase, required for anchoring microtubule at the mother centriole subdistal appendages and for centrosome positioning. During mitosis, may be involved in spindle assembly and chromatin alignment by regulating the organization of spindle microtubules into a symmetrical structure. Plays a non-essential role in ciliogenesis. The sequence is that of Centrosomal protein CCDC61 from Danio rerio (Zebrafish).